The primary structure comprises 465 residues: tRNA modification GTPase MnmE (465 aa).

3 residues coordinate (6S)-5-formyl-5,6,7,8-tetrahydrofolate: Arg-24, Glu-84, and Lys-127. In terms of domain architecture, TrmE-type G spans 223–383 (GLNIVLAGQP…LRGELLRLIG (161 aa)). Asn-233 lines the K(+) pocket. GTP contacts are provided by residues 233-238 (NVGKSS), 252-258 (TAIAGTT), and 277-280 (DTAG). Mg(2+) is bound at residue Ser-237. K(+) contacts are provided by Thr-252, Ile-254, and Thr-257. Residue Thr-258 participates in Mg(2+) binding. Lys-465 provides a ligand contact to (6S)-5-formyl-5,6,7,8-tetrahydrofolate.

This sequence belongs to the TRAFAC class TrmE-Era-EngA-EngB-Septin-like GTPase superfamily. TrmE GTPase family. In terms of assembly, homodimer. Heterotetramer of two MnmE and two MnmG subunits. Requires K(+) as cofactor.

It is found in the cytoplasm. Exhibits a very high intrinsic GTPase hydrolysis rate. Involved in the addition of a carboxymethylaminomethyl (cmnm) group at the wobble position (U34) of certain tRNAs, forming tRNA-cmnm(5)s(2)U34. The chain is tRNA modification GTPase MnmE from Janthinobacterium sp. (strain Marseille) (Minibacterium massiliensis).